The following is a 199-amino-acid chain: MSLKSDSETNTSVSLEEEVRTLFVSGLPVDIKPRELYLLFRPFKGYEGSLIKLTSKQPVGFVTFDSRSGAEAAKNALNGIRFDPESPQTLRLEFAKANTKMAKSKLMATPNPSNLHPALGAHFIARDPYDLTGAALIPASPEAWAPYPLYTTELTPGLPHAAFTYPAAAAAAAALHAQMRWYPSPSESSQPGWKSRQFC.

One can recognise an RRM domain in the interval 20–97; sequence RTLFVSGLPV…QTLRLEFAKA (78 aa).

In terms of assembly, interacts with Bucky ball (BUC); to mediate Balbiani body formation and oocyte polarity during early oogenesis.

It localises to the cytoplasm. It is found in the nucleus. The protein resides in the stress granule. Its function is as follows. RNA-binding protein involved in the regulation of smooth muscle cell differentiation and proliferation in the gastrointestinal system. RNA-binding protein localized in Balbiani body (electron-dense aggregates in the oocyte) and germ plasm during oogenesis, and may be required to maintain germ plasm mRNA translational repression. Translational regulator during topographic map formation in the visual system. Establishes oocyte polarity through interaction with Bucky ball (BUC). Acts as a pre-mRNA alternative splicing regulator. Mediates ACTN1 and FLNB alternative splicing. Likely binds to mRNA tandem CAC trinucleotide or CA dinucleotide motifs. This chain is RNA-binding protein, mRNA-processing factor 2a, found in Danio rerio (Zebrafish).